A 237-amino-acid polypeptide reads, in one-letter code: MQFVNSGISVTDLRKTFGNSEIIKGVTLDIEDGDYVSLTGKSGSGKSTLLYMISSLDPPSSGTIKIDKKDIYRMNEEEIHEFRNKRMGFIFQFHYLLPEFTAIENVLMPARKAGLLKEYQSYAEHLLEEFDLKDRMNYRINRLSGGQAQRVAIARALVMNPKYIFADEPTGALDSTNTKVVMNILEKVNRETKTTILVVTHDPDFASKTKRQIHLVDGRVVSLKEFEAIKKSVKTAR.

The ABC transporter domain maps to 8–236 (ISVTDLRKTF…EAIKKSVKTA (229 aa)). 40 to 47 (GKSGSGKS) contributes to the ATP binding site.

It belongs to the ABC transporter superfamily. Lipoprotein translocase (TC 3.A.1.125) family. As to quaternary structure, the complex is composed of two ATP-binding proteins (LolD) and two transmembrane proteins (LolC and LolE).

It localises to the cell inner membrane. In terms of biological role, part of the ABC transporter complex LolCDE involved in the translocation of mature outer membrane-directed lipoproteins, from the inner membrane to the periplasmic chaperone, LolA. Responsible for the formation of the LolA-lipoprotein complex in an ATP-dependent manner. The sequence is that of Lipoprotein-releasing system ATP-binding protein LolD from Leptospira interrogans serogroup Icterohaemorrhagiae serovar Lai (strain 56601).